A 129-amino-acid chain; its full sequence is Small ribosomal subunit protein eS6 (129 aa).

The protein belongs to the eukaryotic ribosomal protein eS6 family.

The protein is Small ribosomal subunit protein eS6 of Methanocorpusculum labreanum (strain ATCC 43576 / DSM 4855 / Z).